Consider the following 81-residue polypeptide: Cytotoxin 2b (81 aa).

Residues 1–21 form the signal peptide; the sequence is MKTLLLTLVVVTTVCLDLGYT. Disulfide bonds link Cys24–Cys42, Cys35–Cys59, Cys63–Cys74, and Cys75–Cys80.

The protein belongs to the three-finger toxin family. Short-chain subfamily. Type IA cytotoxin sub-subfamily. In terms of assembly, monomer in solution; Homodimer and oligomer in the presence of negatively charged lipids forming a pore with a size ranging between 20 and 30 Angstroms. Expressed by the venom gland.

It localises to the secreted. The protein localises to the target cell membrane. Functionally, shows cytolytic activity on many different cells by forming pore in lipid membranes. In vivo, increases heart rate or kills the animal by cardiac arrest. In addition, it binds to heparin with high affinity, interacts with Kv channel-interacting protein 1 (KCNIP1) in a calcium-independent manner, and binds to integrin alpha-V/beta-3 (ITGAV/ITGB3) with moderate affinity. The sequence is that of Cytotoxin 2b from Naja sputatrix (Malayan spitting cobra).